The chain runs to 201 residues: MDKFTTLTGIAAPLPLINVDTDMIIPKQFLKTIKRSGLGVNLFDEMRYDDDGNEIPDFVLNQDAYRKAEIIVAGDNFGCGSSREHAPWAIKDFGIRCVIAPSFADIFYNNCFKNGILPIALPQEQVDVLMKDAEKGANARMTVDLETQTVTTSDGEVFSFDLDPFKKRCLMEGLDDIGLTMEKISAIDSFEQSAAQARPWV.

This sequence belongs to the LeuD family. LeuD type 1 subfamily. As to quaternary structure, heterodimer of LeuC and LeuD.

The enzyme catalyses (2R,3S)-3-isopropylmalate = (2S)-2-isopropylmalate. It participates in amino-acid biosynthesis; L-leucine biosynthesis; L-leucine from 3-methyl-2-oxobutanoate: step 2/4. In terms of biological role, catalyzes the isomerization between 2-isopropylmalate and 3-isopropylmalate, via the formation of 2-isopropylmaleate. The sequence is that of 3-isopropylmalate dehydratase small subunit from Roseobacter denitrificans (strain ATCC 33942 / OCh 114) (Erythrobacter sp. (strain OCh 114)).